The primary structure comprises 176 residues: Peroxynitrite isomerase 1 (176 aa).

Positions 1–23 (MDENSTLSPAHSDAAASSSANTP) are disordered. The span at 8–20 (SPAHSDAAASSSA) shows a compositional bias: low complexity. A GXWXGXG motif is present at residues 37 to 43 (GLWRGEG). His168 lines the heme b pocket.

The protein belongs to the nitrobindin family. As to quaternary structure, homodimer. It depends on heme b as a cofactor.

It carries out the reaction peroxynitrite = nitrate. The protein operates within nitrogen metabolism. Its function is as follows. Heme-binding protein able to scavenge peroxynitrite and to protect free L-tyrosine against peroxynitrite-mediated nitration, by acting as a peroxynitrite isomerase that converts peroxynitrite to nitrate. Therefore, this protein likely plays a role in peroxynitrite sensing and in the detoxification of reactive nitrogen and oxygen species (RNS and ROS, respectively). Is able to bind nitric oxide (NO) in vitro, but may act as a sensor of peroxynitrite levels in vivo. This Rhodococcus jostii (strain RHA1) protein is Peroxynitrite isomerase 1.